A 236-amino-acid chain; its full sequence is Small ribosomal subunit protein uS5 (236 aa).

A compositionally biased stretch (basic and acidic residues) spans 1–10 (MTENNEKDIQ). The disordered stretch occupies residues 1–64 (MTENNEKDIQ…GRDGGREAEK (64 aa)). A compositionally biased stretch (low complexity) spans 11–27 (VTEAVAAPATETAAPAT). Over residues 28–64 (TDDRRGGARRGERGDRGQGRGDRGGRGGRDGGREAEK) the composition is skewed to basic and acidic residues. In terms of domain architecture, S5 DRBM spans 67–130 (FVERVVTINR…EEAKKSFFRV (64 aa)).

It belongs to the universal ribosomal protein uS5 family. Part of the 30S ribosomal subunit. Contacts proteins S4 and S8.

Its function is as follows. With S4 and S12 plays an important role in translational accuracy. In terms of biological role, located at the back of the 30S subunit body where it stabilizes the conformation of the head with respect to the body. The sequence is that of Small ribosomal subunit protein uS5 from Arthrobacter sp. (strain FB24).